The chain runs to 541 residues: Beta-glucuronidase (541 aa).

A signal peptide spans 1 to 20 (MHHHPITLLSLLLGAAQSIA). 3 N-linked (GlcNAc...) asparagine glycosylation sites follow: asparagine 69, asparagine 115, and asparagine 157. Glutamate 208 acts as the Proton donor in catalysis. Asparagine 217, asparagine 291, and asparagine 304 each carry an N-linked (GlcNAc...) asparagine glycan. Glutamate 324 (nucleophile) is an active-site residue. N-linked (GlcNAc...) asparagine glycans are attached at residues asparagine 380, asparagine 426, asparagine 441, asparagine 483, and asparagine 512.

This sequence belongs to the glycosyl hydrolase 79 family. N-glycosylated.

The protein resides in the secreted. It catalyses the reaction a beta-D-glucuronoside + H2O = D-glucuronate + an alcohol. Its function is as follows. Beta-glucuronidase that hydrolyzes beta-glucuronosyl and 4-O-methyl-beta-glucuronosyl residues of arabinogalactan-protein. Hydrolyzed heparan sulfate only very weakly. Has no activity on xylan from birchwood. Able to catalyze the transglycosylation of glucuronic acid (GlcA) residues from p-nitrophenyl-beta-glucuronic acid (PNP beta-GlcA) to various monosaccharide acceptors such as glucose, galactose and xylose. The chain is Beta-glucuronidase from Aspergillus niger (strain ATCC MYA-4892 / CBS 513.88 / FGSC A1513).